The chain runs to 23 residues: Acidic phospholipase A2 CTs-A2 (23 aa).

The cofactor is Ca(2+). In terms of processing, contains 7 disulfide bonds. In terms of tissue distribution, expressed by the venom gland.

The protein localises to the secreted. The catalysed reaction is a 1,2-diacyl-sn-glycero-3-phosphocholine + H2O = a 1-acyl-sn-glycero-3-phosphocholine + a fatty acid + H(+). Its function is as follows. Snake venom phospholipase A2 (PLA2) that shows a moderate inhibition of ADP-induced human platelet aggregation when tested on platelet rich plasma. Exhibits moderate hydrolytic activities and prefers the anionic micelles (dPPC with deoxycholate) to the zwitterionic micelles (dPPC with Triton X-100). PLA2 catalyzes the calcium-dependent hydrolysis of the 2-acyl groups in 3-sn-phosphoglycerides. The protein is Acidic phospholipase A2 CTs-A2 of Trimeresurus stejnegeri (Chinese green tree viper).